The chain runs to 369 residues: uncharacterized protein (369 aa).

The protein belongs to the myo-inositol 1-phosphate synthase family.

This is an uncharacterized protein from Mycobacterium leprae (strain TN).